The following is a 143-amino-acid chain: Large ribosomal subunit protein uL11 (143 aa).

Belongs to the universal ribosomal protein uL11 family. Part of the ribosomal stalk of the 50S ribosomal subunit. Interacts with L10 and the large rRNA to form the base of the stalk. L10 forms an elongated spine to which L12 dimers bind in a sequential fashion forming a multimeric L10(L12)X complex. Post-translationally, one or more lysine residues are methylated.

Forms part of the ribosomal stalk which helps the ribosome interact with GTP-bound translation factors. This Novosphingobium aromaticivorans (strain ATCC 700278 / DSM 12444 / CCUG 56034 / CIP 105152 / NBRC 16084 / F199) protein is Large ribosomal subunit protein uL11.